The primary structure comprises 292 residues: Peroxidase 2 (292 aa).

4 cysteine pairs are disulfide-bonded: Cys-7–Cys-86, Cys-40–Cys-45, Cys-92–Cys-288, and Cys-171–Cys-199. His-38 serves as the catalytic Proton acceptor. Ca(2+) contacts are provided by Asp-39, Val-42, Gly-44, Asp-46, and Ser-48. The N-linked (GlcNAc...) asparagine glycan is linked to Asn-68. Pro-134 serves as a coordination point for substrate. N-linked (GlcNAc...) asparagine glycosylation occurs at Asn-139. His-164 contributes to the heme b binding site. Thr-165 provides a ligand contact to Ca(2+). A glycan (N-linked (GlcNAc...) asparagine) is linked at Asn-179. 3 residues coordinate Ca(2+): Asp-210, Thr-213, and Asp-218.

It belongs to the peroxidase family. Classical plant (class III) peroxidase subfamily. The cofactor is Ca(2+). Requires heme b as cofactor.

It carries out the reaction 2 a phenolic donor + H2O2 = 2 a phenolic radical donor + 2 H2O. In terms of biological role, removal of H(2)O(2), oxidation of toxic reductants, biosynthesis and degradation of lignin, suberization, auxin catabolism, response to environmental stresses such as wounding, pathogen attack and oxidative stress. These functions might be dependent on each isozyme/isoform in each plant tissue. In Cucumis sativus (Cucumber), this protein is Peroxidase 2.